The chain runs to 211 residues: Orotate phosphoribosyltransferase (211 aa).

5-phospho-alpha-D-ribose 1-diphosphate is bound by residues R103, K107, H109, and 129–137 (EDLISTGKS). An orotate-binding site is contributed by S133.

Belongs to the purine/pyrimidine phosphoribosyltransferase family. PyrE subfamily. Homodimer. Mg(2+) serves as cofactor.

The catalysed reaction is orotidine 5'-phosphate + diphosphate = orotate + 5-phospho-alpha-D-ribose 1-diphosphate. It participates in pyrimidine metabolism; UMP biosynthesis via de novo pathway; UMP from orotate: step 1/2. Its function is as follows. Catalyzes the transfer of a ribosyl phosphate group from 5-phosphoribose 1-diphosphate to orotate, leading to the formation of orotidine monophosphate (OMP). This chain is Orotate phosphoribosyltransferase, found in Fusobacterium nucleatum subsp. nucleatum (strain ATCC 25586 / DSM 15643 / BCRC 10681 / CIP 101130 / JCM 8532 / KCTC 2640 / LMG 13131 / VPI 4355).